A 943-amino-acid chain; its full sequence is MIDLSFLTEEEQEAIMKVLQRDAALKRAEEERVRHLPEKVKDDQQLKNMSGQWFYEAKAKRHRDRIHGADIIRVSMRKKRPQVADEQSKDRANRAKESWVNNVHKDAFLPPELTGVVEEPEEDVAPASPSSSVVNPVSTMIDASQENTRKSAISPAKPRKNPFNSSMLPEDHLSQQTKNEQSKNGKTGLFQTSKEGELSESKEESSILDISSQKLEKPKQTLPGPESGFPIKAPVPKPRKMIYKSQDLKQDDNQPFPRQRTDSLTTRGAPRGILKRNSSSSSTDSETVRFHQNFEPKSKIVSLGLTIHERISEKEHSLEDDSPSNSLEPLKHVRFSAVKDELPQSSGLVHGREVGEFSVLESDRLKNGTEDAGLTDEVWNDPQPSQYTNGLPFQSSASSPSPSKNETSQPTTSGSFPINEHPSSKEFLTTRAQSTENSHTINEHKTSSSELSKNPADELSCTEPESSQVPDCSSRDHQQGSEEEPSPVLKILERSAARKMPSKSLEDISSDSSNQAKVDNLPEELVRSAEDDQKADQEPDTNECIPGISTVSSQPDNQFSHPDKLKRMSKSVPAFLQDESDDRETDTASEGSYQLSRHKKSPSSLTNLSSNSGMTSLSSVSGSVMSVYSGDFGNLEVKGSIQFAIDYVDSLKELHVFVAQCKDLAAADIKKQRSDPYVKTYLLPDKGKMGKKKTLVVKKTLNPVYNEILRYKINKQILKTQKLNLSVWHRDTFKRNSFLGEVELDLETWDWDNKQNKQLKWYPLKRKTAPVPLEAENRGEMKLALQYVPEPVPGKKLPTTGEVHIWVKECLDLPLLRGSHLNSFVKCTILPDTSRKSRQKTRAVGKTTNPVFNHTMVYDGFRPEDLTEACVELTVWDHYKLTNQFLGGLRIGFGTGKSYGTEVDWMDSTSEEVALWEKMVKSPNTWIEAILPLRMLLIAKISK.

The RabBD domain maps to 1-57 (MIDLSFLTEEEQEAIMKVLQRDAALKRAEEERVRHLPEKVKDDQQLKNMSGQWFYEA). Disordered stretches follow at residues 77–99 (RKKRPQVADEQSKDRANRAKESW), 118–291 (EEPE…VRFH), and 361–613 (ESDR…SNSG). Over residues 82-99 (QVADEQSKDRANRAKESW) the composition is skewed to basic and acidic residues. Positions 125-138 (APASPSSSVVNPVS) are enriched in low complexity. Positions 174 to 192 (SQQTKNEQSKNGKTGLFQT) are enriched in polar residues. The segment covering 194–205 (KEGELSESKEES) has biased composition (basic and acidic residues). Composition is skewed to polar residues over residues 382–394 (PQPSQYTNGLPFQ), 404–416 (KNETSQPTTSGSF), and 426–440 (EFLTTRAQSTENSHT). Residues 524-537 (ELVRSAEDDQKADQ) are compositionally biased toward basic and acidic residues. Polar residues predominate over residues 549-560 (STVSSQPDNQFS). The span at 603-613 (SSLTNLSSNSG) shows a compositional bias: low complexity. C2 domains follow at residues 637-762 (VKGS…LKWY) and 777-906 (NRGE…VDWM).

Monomer. Binds NRXN1. Binds RAB27A that has been activated by GTP-binding via its N-terminus. Interacts with RAB27B.

Its subcellular location is the cell membrane. Its function is as follows. May act as a RAB27A effector protein and play a role in cytotoxic granule exocytosis in lymphocytes. In Bos taurus (Bovine), this protein is Synaptotagmin-like protein 2 (SYTL2).